A 531-amino-acid chain; its full sequence is Tyrosine 2,3-aminomutase (531 aa).

Catalysis depends on Tyr-51, which acts as the Proton donor/acceptor. Residue His-81 participates in substrate binding. The 5-imidazolinone (Ala-Gly) cross-link spans 140-142 (ASG). Ser-141 is modified (2,3-didehydroalanine (Ser)). Asn-193 and Arg-298 together coordinate substrate.

The protein belongs to the TAL/TAM family. Homotetramer; dimer of dimers. Post-translationally, contains an active site 4-methylidene-imidazol-5-one (MIO), which is formed autocatalytically by cyclization and dehydration of residues Ala-Ser-Gly.

It catalyses the reaction L-tyrosine = 3-amino-3-(4-hydroxyphenyl)propanoate. It carries out the reaction L-tyrosine = (E)-4-coumarate + NH4(+). Has aminomutase and, to a lesser extent, ammonia-lyase activity. Primarily, catalyzes the rearrangement of L-tyrosine to R-beta-tyrosine, which is incorporated into secondary metabolites called chondramides. The aminomutase activity mainly produces R-beta-tyrosine but also S-beta tyrosine in smaller amounts. Does not accept D-tyrosine, L-histidine or L-phenylalanine as substrates. The sequence is that of Tyrosine 2,3-aminomutase from Chondromyces crocatus.